Here is a 219-residue protein sequence, read N- to C-terminus: MHTVQKDTTFTKIFVGGLPYHTTDASLRKYFEVFGDIDEAVVITDRQTGKSRGYGFVTMSDRAAAERACKDPNPIIDGRKANVNLAYLGAKPRNLQSAFTIGVQQLHPAFIQRPFGLTPQYIYPPAIVQPSVVIPTPIPSLQSPYIDYNAATQAFTHYTTAAYEQYPYAASPATGYMGYGYTSAVQQPLSATTTTATTGAPPTAYIQYQPQQLQPDRMQ.

An RRM domain is found at 11 to 88 (TKIFVGGLPY…RKANVNLAYL (78 aa)).

The protein belongs to the RBM38 family.

It localises to the cytoplasm. It is found in the cytosol. Its subcellular location is the nucleus. Functionally, RNA-binding protein that specifically bind the 3'-UTR of VegT transcripts, leading to maintain their stability and stimulate their translation, thereby playing a role in germ layer formation. VegT is a localized maternal determinant essentially required for endoderm formation. Also has some proneural function in the open neural plate and in the context of retinogenesis. May also act as a mRNA splicing factor. May play a role in myogenic differentiation. The protein is RNA-binding protein 38 (rbm38) of Xenopus tropicalis (Western clawed frog).